A 264-amino-acid chain; its full sequence is MRIVLGVEYAGSAFEGFQSQAHGRTVQDHLEAAIGHIAAHPVRLHCAGRTDAGVHATAQVVHFDTESVRPNSGWVRGVNSRLSSPVVVRWATEAGDGFHARFCAVSRRYRYILHNSPVRPALLAGRVGWFHPPLDEIAMAEAARCLEGWHDFSAFRAAGCQAKSPVKLMHEVRVQRAGDYVVFDFWANAFLHHMVRNLVGALVYVGKGRHSAAWLAEVLAARDRSLAALTFSADGLYLCGVEYAPHWSLPGEGRIIVVPRIPFV.

Aspartate 51 functions as the Nucleophile in the catalytic mechanism. Tyrosine 109 lines the substrate pocket.

The protein belongs to the tRNA pseudouridine synthase TruA family. In terms of assembly, homodimer.

The enzyme catalyses uridine(38/39/40) in tRNA = pseudouridine(38/39/40) in tRNA. Formation of pseudouridine at positions 38, 39 and 40 in the anticodon stem and loop of transfer RNAs. The protein is tRNA pseudouridine synthase A of Aromatoleum aromaticum (strain DSM 19018 / LMG 30748 / EbN1) (Azoarcus sp. (strain EbN1)).